The chain runs to 469 residues: Glutamate--tRNA ligase (469 aa).

The 'HIGH' region motif lies at 9-19 (PSPTGFLHVGG). Positions 236-240 (KLSKR) match the 'KMSKS' region motif. K239 serves as a coordination point for ATP.

The protein belongs to the class-I aminoacyl-tRNA synthetase family. Glutamate--tRNA ligase type 1 subfamily. In terms of assembly, monomer.

It localises to the cytoplasm. The enzyme catalyses tRNA(Glu) + L-glutamate + ATP = L-glutamyl-tRNA(Glu) + AMP + diphosphate. Functionally, catalyzes the attachment of glutamate to tRNA(Glu) in a two-step reaction: glutamate is first activated by ATP to form Glu-AMP and then transferred to the acceptor end of tRNA(Glu). This is Glutamate--tRNA ligase from Shewanella amazonensis (strain ATCC BAA-1098 / SB2B).